The sequence spans 500 residues: DNA polymerase processivity factor (500 aa).

A disordered region spans residues 388 to 500; sequence VSESDDAAAE…QEPANKRGKR (113 aa). The segment covering 438–449 has biased composition (polar residues); the sequence is TLQQSAQPSSPA.

This sequence belongs to the herpesviridae DNA polymerase processivity factor family. In terms of assembly, interacts with the DNA polymerase catalytic subunit UL30. Interacts with the origin-binding protein.

The protein localises to the host nucleus. Functionally, plays an essential role in viral DNA replication by acting as the polymerase accessory subunit. Associates with the viral polymerase to increase its processivity and forms high-affinity direct interactions with DNA. Facilitates the origin-binding protein UL9 loading onto DNA thus increasing its ability to assemble into a functional complex capable of unwinding duplex DNA. This is DNA polymerase processivity factor (UL42) from Amazona oratrix (yellow-headed parrot).